Here is an 864-residue protein sequence, read N- to C-terminus: DNA mismatch repair protein MutS (864 aa).

621–628 (GPNMGGKS) provides a ligand contact to ATP. The segment at 804-833 (ETGKPESPAPVASRSSKPSMQADMFAEPQP) is disordered.

The protein belongs to the DNA mismatch repair MutS family.

Functionally, this protein is involved in the repair of mismatches in DNA. It is possible that it carries out the mismatch recognition step. This protein has a weak ATPase activity. The protein is DNA mismatch repair protein MutS of Teredinibacter turnerae (strain ATCC 39867 / T7901).